Consider the following 558-residue polypeptide: MSFKTDAETAQSSTMRPIGEIAAKLGLNVDNIEPYGHYKAKINPAEAFKLPQKQGRLILVTAINPTPAGEGKTTVTIGLADALRHIGKDSVIALREPSLGPVFGVKGGAAGGGYAQVLPMEDINLHFTGDFHAIGAANNLLAAMLDNHIYQGNELNIDPKRVLWRRVVDMNDRQLRNIIDGMGKPVDGVMRPDGFDITVASEVMAVFCLAKDISDLKERFGNILVAYAKDGSPVYAKDLKAHGAMAALLKDAIKPNLVQTIEGTPAFVHGGPFANIAHGCNSVTATRLAKHLADYAVTEAGFGADLGAEKFCDIKCRLAGLKPDAAVVVATVRALKYNGGVERANLGEENLEALAKGLPNLLKHISNLKNVFGLPVVVALNRFVSDSDAELAMIEKACAEHGVEVSLTEVWGKGGAGGADLARKVVNAIDNQPNNFGFAYDVELGIKDKIRAIAQKVYGAEDVDFSAEASAEIASLEKLGLDKMPICMAKTQYSLSDNAKLLGCPEGFRIAVRGITVSAGAGFIVALCGNMMKMPGLPKVPAAEKIDVDEHGVIHGLF.

Residue Thr-66 to Thr-73 participates in ATP binding.

Belongs to the formate--tetrahydrofolate ligase family.

The catalysed reaction is (6S)-5,6,7,8-tetrahydrofolate + formate + ATP = (6R)-10-formyltetrahydrofolate + ADP + phosphate. The protein operates within one-carbon metabolism; tetrahydrofolate interconversion. This is Formate--tetrahydrofolate ligase from Neisseria gonorrhoeae (strain ATCC 700825 / FA 1090).